The following is a 391-amino-acid chain: Phosphoglycerate kinase (391 aa).

Substrate-binding positions include 21–23 (DLN), arginine 36, 59–62 (HLGR), arginine 113, and arginine 146. ATP is bound by residues lysine 197, glutamate 319, and 345–348 (GGDT).

Belongs to the phosphoglycerate kinase family. Monomer.

It is found in the cytoplasm. It carries out the reaction (2R)-3-phosphoglycerate + ATP = (2R)-3-phospho-glyceroyl phosphate + ADP. It functions in the pathway carbohydrate degradation; glycolysis; pyruvate from D-glyceraldehyde 3-phosphate: step 2/5. The sequence is that of Phosphoglycerate kinase from Xanthomonas campestris pv. campestris (strain 8004).